Consider the following 503-residue polypeptide: ESX-5 secretion system protein EccD5 (503 aa).

The next 11 membrane-spanning stretches (helical) occupy residues 137-157 (IVAVQVGASMVATGVVLATGV), 169-189 (LTTIYTAVIGVLVLAVAMLLL), 200-220 (VADIMLMSAIMPVTVAAAAAP), 224-244 (VGSPQAVLGFGVLTVAAALAL), 250-270 (RLGIYTTIVIIGALTMLAALA), 272-292 (MVAATSAVTLLSSLLLICVVA), 359-379 (FLSGLLTGLGVMVVVCMTSLC), 382-402 (HTGQRWLPLILAGFTSGFLLL), 413-433 (SITLAGTAVIIAAAVCVRYAL), 439-459 (LAVSIVAAILVLLPAAGMAAA), and 480-500 (YLCLMPIFPLALWLMNVYAAI).

The protein belongs to the EccD/Snm4 family. As to quaternary structure, part of the ESX-5 / type VII secretion system (T7SS), which is composed of cytosolic and membrane components. The ESX-5 membrane complex is composed of EccB5, EccC5, EccD5 and EccE5.

It localises to the cell inner membrane. Functionally, part of the ESX-5 specialized secretion system, which is responsible for the secretion of EsxN and a number of PE_PGRS and PPE proteins, including PPE41. The polypeptide is ESX-5 secretion system protein EccD5 (Mycobacterium tuberculosis (strain CDC 1551 / Oshkosh)).